Consider the following 326-residue polypeptide: Polycomb complex protein BMI-1 (326 aa).

The RING-type zinc-finger motif lies at 18 to 57 (CVLCGGYFIDATTIIECLHSFCKTCIVRYLETSKYCPICD). The Nuclear localization signal motif lies at 81–95 (KLVPGLFKNEMKRRR). The interval 162-182 (RYLRCPAAMTVMHLRKFLRSK) is interaction with PHC2. Residues 164–228 (LRCPAAMTVM…GPLPLKYRVR (65 aa)) form an interaction with E4F1 region. The disordered stretch occupies residues 236 to 326 (ISHQRDGLTN…VNGSSATSSG (91 aa)). Composition is skewed to low complexity over residues 266-278 (PSTSSCLPSPSTP), 290-303 (SSTMNGTSSSPSGN), and 315-326 (SSVNGSSATSSG).

Component of a PRC1-like complex. Identified in a PRC1-like HPRC-H complex with CBX2, CBX4, CBX8, PHC1, PHC2, PHC3 RING1 and RNF2. Interacts with RNF2/RING2. Interacts with RING1. Part of a complex that contains RNF2, UB2D3 and BMI1, where RNF2 and BMI1 form a tight heterodimer, and UB2D3 interacts only with RNF2. The complex composed of RNF2, UB2D3 and BMI1 binds nucleosomes, and has activity only with nucleosomal histone H2A. Interacts with CBX7 and CBX8. Interacts with SPOP. Part of a complex consisting of BMI1, CUL3 and SPOP. Interacts with E4F1. Interacts with PHC2. Interacts with zinc finger protein ZNF277. May be part of a complex including at least ZNF277, BMI1 and RNF2/RING2. Post-translationally, may be polyubiquitinated; which does not lead to proteasomal degradation. Monoubiquitinated.

It is found in the nucleus. Its subcellular location is the cytoplasm. Component of a Polycomb group (PcG) multiprotein PRC1-like complex, a complex class required to maintain the transcriptionally repressive state of many genes, including Hox genes, throughout development. PcG PRC1 complex acts via chromatin remodeling and modification of histones; it mediates monoubiquitination of histone H2A 'Lys-119', rendering chromatin heritably changed in its expressibility. The complex composed of RNF2, UB2D3 and BMI1 binds nucleosomes, and has activity only with nucleosomal histone H2A. In the PRC1-like complex, regulates the E3 ubiquitin-protein ligase activity of RNF2/RING2. In Bos taurus (Bovine), this protein is Polycomb complex protein BMI-1 (BMI1).